Reading from the N-terminus, the 754-residue chain is Protein neuralized (754 aa).

Positions 106–260 (PLQFHSVHGD…NCTGIEFLDS (155 aa)) constitute an NHR 1 domain. The segment covering 280-297 (QQQQMPQPAANASSALNS) has biased composition (low complexity). Positions 280 to 308 (QQQQMPQPAANASSALNSHHPHQQSRRSL) are disordered. 2 positions are modified to phosphoserine: Ser338 and Ser341. Residues 368 to 523 (PVPFHNTKGR…STQSLRMFRQ (156 aa)) enclose the NHR 2 domain. The RING-type zinc finger occupies 701–742 (CTICYENPIDSVLYMCGHMCMCYDCAIEQWRGVGGGQCPLCR).

It is found in the nucleus. Its function is as follows. Involved in neurogenesis. Interacts with other neurogenic proteins in the specification of the neuroblast versus epidermoblast cell fate. This Drosophila melanogaster (Fruit fly) protein is Protein neuralized (neur).